The chain runs to 322 residues: NADH-cytochrome b5 reductase 2 (322 aa).

Residues 31 to 48 (LAPIYAAVGITGVGVGLY) traverse the membrane as a helical segment. The FAD-binding FR-type domain occupies 72 to 176 (QGWFDLKLSE…KGPIVKYPWE (105 aa)). FAD is bound at residue 179-214 (KHNHICLIAGGTGITPMYQLAREIFKNPEDQTKVTL).

This sequence belongs to the flavoprotein pyridine nucleotide cytochrome reductase family. FAD is required as a cofactor.

It localises to the mitochondrion outer membrane. It catalyses the reaction 2 Fe(III)-[cytochrome b5] + NADH = 2 Fe(II)-[cytochrome b5] + NAD(+) + H(+). Its function is as follows. May mediate the reduction of outer membrane cytochrome b5. This chain is NADH-cytochrome b5 reductase 2 (mcr1), found in Aspergillus niger (strain ATCC MYA-4892 / CBS 513.88 / FGSC A1513).